Consider the following 632-residue polypeptide: Cyclic GMP-AMP synthase-like receptor 2 (632 aa).

The Mg(2+) site is built by aspartate 71, aspartate 73, and aspartate 181. Aspartate 295 provides a ligand contact to Mn(2+).

Belongs to the mab-21 family. Mg(2+) serves as cofactor. Mn(2+) is required as a cofactor.

Nucleotidyltransferase that catalyzes the formation of some cyclic nucleotide and plays a key role in innate immunity. Directly binds some unknown ligand, activating the nucleotidyltransferase activity, leading to synthesis of a second messenger that binds to and activates Sting, thereby triggering the immune response via activation of the NF-kappa-B transcription factor. The polypeptide is Cyclic GMP-AMP synthase-like receptor 2 (Crassostrea virginica (Eastern oyster)).